A 318-amino-acid polypeptide reads, in one-letter code: Vomeronasal type-1 receptor 45 (318 aa).

Topologically, residues 1–32 (MSEILFFSPQPLFSHMMNKNSRLHTHSNIKNT) are extracellular. The helical transmembrane segment at 33–53 (FFSEIGIGILGNSFLLLFHIL) threads the bilayer. At 54–65 (KFIRGHRLRLTD) the chain is on the cytoplasmic side. The helical transmembrane segment at 66–86 (LPIGLLSLIHLLMLLLMAFIA) threads the bilayer. Residues 87–109 (TDIFISRRGWDDIICKFLVYLYR) are Extracellular-facing. A disulfide bridge links Cys101 with Cys188. A helical membrane pass occupies residues 110 to 130 (VLRGLSLCTTSMLSVLQAIIL). The Cytoplasmic portion of the chain corresponds to 131 to 150 (SPRSSCLAKLKHKYPHHISC). A helical membrane pass occupies residues 151–171 (AIIFLSVLYMLISSHILLSII). Topologically, residues 172 to 206 (ATPNLTRNDFLYVTQSCSILPLSYVMQSMYSTLLA) are extracellular. Asn175 is a glycosylation site (N-linked (GlcNAc...) asparagine). A helical membrane pass occupies residues 207–227 (LREVFLISLMVLSTLYMVVLL). The Cytoplasmic segment spans residues 228 to 254 (CRHRKQAQHLQGTSLSPKASAEQRATQ). A helical membrane pass occupies residues 255–275 (TILMLMTFFVLMSIFDSIVSC). At 276 to 285 (SRTMFLDDPT) the chain is on the extracellular side. A helical membrane pass occupies residues 286 to 306 (SYSIHIFVMHIYATVSPFVFM). Residues 307–318 (STEKHIVNILRG) are Cytoplasmic-facing.

This sequence belongs to the G-protein coupled receptor 1 family. In terms of tissue distribution, expressed in a subset of sensory neurons located in the apical layer of the vomeronasal organ.

The protein localises to the cell membrane. Putative pheromone receptor implicated in the regulation of social and reproductive behavior. This chain is Vomeronasal type-1 receptor 45 (Vmn1r45), found in Mus musculus (Mouse).